Reading from the N-terminus, the 322-residue chain is DNA repair and recombination protein RadA (322 aa).

Residue 105 to 112 coordinates ATP; it reads GMFGSGKT.

This sequence belongs to the eukaryotic RecA-like protein family.

Its function is as follows. Involved in DNA repair and in homologous recombination. Binds and assemble on single-stranded DNA to form a nucleoprotein filament. Hydrolyzes ATP in a ssDNA-dependent manner and promotes DNA strand exchange between homologous DNA molecules. The sequence is that of DNA repair and recombination protein RadA from Methanococcus maripaludis (strain DSM 14266 / JCM 13030 / NBRC 101832 / S2 / LL).